Reading from the N-terminus, the 152-residue chain is SsrA-binding protein (152 aa).

The protein belongs to the SmpB family.

Its subcellular location is the cytoplasm. Functionally, required for rescue of stalled ribosomes mediated by trans-translation. Binds to transfer-messenger RNA (tmRNA), required for stable association of tmRNA with ribosomes. tmRNA and SmpB together mimic tRNA shape, replacing the anticodon stem-loop with SmpB. tmRNA is encoded by the ssrA gene; the 2 termini fold to resemble tRNA(Ala) and it encodes a 'tag peptide', a short internal open reading frame. During trans-translation Ala-aminoacylated tmRNA acts like a tRNA, entering the A-site of stalled ribosomes, displacing the stalled mRNA. The ribosome then switches to translate the ORF on the tmRNA; the nascent peptide is terminated with the 'tag peptide' encoded by the tmRNA and targeted for degradation. The ribosome is freed to recommence translation, which seems to be the essential function of trans-translation. This chain is SsrA-binding protein, found in Lactobacillus helveticus (strain DPC 4571).